A 380-amino-acid polypeptide reads, in one-letter code: MTNIRKTHPLIKIINETIIDLPTPSNISIWWNFGSLLGICLITQIVTGLFLAMHYTADITTAFSSVAHICRDVNYGWLIRSTHANGASLFFICIYLHVARGLYYGSYLQKETWNIGVILLMLVMITAFVGYVLPWGQMSFWGATVITNLLSAVPYIGDTLVQWIWGGFSVDNATLTRFFAFHFLLPFVISGASIIHLLFLHETGSNNPTGLNSDADKVTFHPYFSYKDMLGFLITLTTLAFLTLFTPNLLGDPENFTPANPLTTPPHIKPEWYFLFAYAILRSIPNKLGGVLALVSSILVLLLVPILHTSKQRGNTFRPITQMLFWALVADMLILTWIGGQPVEYPFMTIGQIASITYFSLFLILIPMTGWLENKAMNWN.

4 helical membrane passes run 33-53 (FGSL…FLAM), 77-98 (WLIR…YLHV), 113-133 (WNIG…GYVL), and 178-198 (FFAF…IHLL). Heme b-binding residues include His-83 and His-97. His-182 and His-196 together coordinate heme b. An a ubiquinone-binding site is contributed by His-201. Transmembrane regions (helical) follow at residues 226-246 (YKDM…TLFT), 288-308 (LGGV…PILH), 320-340 (ITQM…WIGG), and 347-367 (FMTI…ILIP).

This sequence belongs to the cytochrome b family. As to quaternary structure, the cytochrome bc1 complex contains 3 respiratory subunits (MT-CYB, CYC1 and UQCRFS1), 2 core proteins (UQCRC1 and UQCRC2) and probably 6 low-molecular weight proteins. Heme b is required as a cofactor.

It localises to the mitochondrion inner membrane. Component of the ubiquinol-cytochrome c reductase complex (complex III or cytochrome b-c1 complex) that is part of the mitochondrial respiratory chain. The b-c1 complex mediates electron transfer from ubiquinol to cytochrome c. Contributes to the generation of a proton gradient across the mitochondrial membrane that is then used for ATP synthesis. The protein is Cytochrome b (mt-cyb) of Latimeria chalumnae (Coelacanth).